Here is a 515-residue protein sequence, read N- to C-terminus: N-acetylglucosamine-1-phosphodiester alpha-N-acetylglucosaminidase (515 aa).

Residues 1 to 25 (MATSTGRWLLLRLALFGFLWEASGG) form the signal peptide. Residues 26–49 (LDSGASRDDDLLLPYPRARARLPR) constitute a propeptide, removed in mature form. The Lumenal portion of the chain corresponds to 50-448 (DCTRVRAGNR…AGELSFFTRT (399 aa)). Disulfide bonds link C115–C148, C132–C323, C307–C314, C362–C373, and C380–C389. N-linked (GlcNAc...) asparagine glycosylation is found at N208, N214, and N296. The EGF-like domain occupies 358–390 (DELDCGPSNCSQHGLCTETGCRCDAGWTGSNCS). N-linked (GlcNAc...) asparagine glycosylation is found at N366, N388, and N420. The chain crosses the membrane as a helical span at residues 449–469 (AWLALTLALAFLLLISTAANL). Topologically, residues 470 to 515 (SLLLSRAERNRRLHGDYAYHPLQEMNGEPLAAEKEQPGGAHNPFKD) are cytoplasmic. Positions 486–493 (YAYHPLQE) are mediates the interaction with AP4M1. Positions 488–491 (YHPL) match the Tyrosine-based internalization motif motif. The NPF internalization motif signature appears at 511-515 (NPFKD).

As to quaternary structure, homotetramer arranged as two disulfide-linked homodimers. Interacts with AP4M1. In terms of processing, the precursor is cleaved and activated in the trans-Golgi network by a furin endopeptidase. Isoform 2 may be brain-specific.

Its subcellular location is the golgi apparatus. The protein localises to the golgi stack membrane. It localises to the trans-Golgi network. The enzyme catalyses N(4)-[6-(N-acetyl-alpha-D-glucosaminyl-1-phospho)-alpha-D-mannosyl-(1-&gt;2)-alpha-D-mannosyl-(glycan)]-L-asparaginyl-[protein] + H2O = N(4)-[6-phospho-alpha-D-mannosyl-(1-&gt;2)-alpha-D-mannosyl-(glycan)]-L-asparaginyl-[protein] + N-acetyl-D-glucosamine + H(+). It participates in protein modification; protein glycosylation. Catalyzes the second step in the formation of the mannose 6-phosphate targeting signal on lysosomal enzyme oligosaccharides by removing GlcNAc residues from GlcNAc-alpha-P-mannose moieties, which are formed in the first step. Also hydrolyzes UDP-GlcNAc, a sugar donor for Golgi N-acetylglucosaminyltransferases. The protein is N-acetylglucosamine-1-phosphodiester alpha-N-acetylglucosaminidase (NAGPA) of Homo sapiens (Human).